The primary structure comprises 377 residues: Malate dehydrogenase, cytoplasmic (377 aa).

The Pro/N-degron motif lies at 2–5; sequence PHSV. At Thr6 the chain carries Phosphothreonine. Residues 20–26 and Asp57 each bind NAD(+); that span reads GAAGGIG. Positions 106 and 112 each coordinate substrate. Residues Asn119 and 144–146 contribute to the NAD(+) site; that span reads ISN. Residues Asn146 and Arg185 each coordinate substrate. Catalysis depends on His215, which acts as the Proton acceptor. Met266 contributes to the NAD(+) binding site.

It belongs to the LDH/MDH superfamily. MDH type 1 family. As to quaternary structure, homodimer. In terms of processing, targeted for proteasomal degradation when cells are shifted to glucose-containing growth medium.

The protein resides in the cytoplasm. The catalysed reaction is (S)-malate + NAD(+) = oxaloacetate + NADH + H(+). In terms of biological role, the isoenzyme MDH2 may function primarily in the glyoxylate cycle. The polypeptide is Malate dehydrogenase, cytoplasmic (MDH2) (Saccharomyces cerevisiae (strain ATCC 204508 / S288c) (Baker's yeast)).